The primary structure comprises 91 residues: Small ribosomal subunit protein bS20 (91 aa).

The disordered stretch occupies residues 1–28 (MPNIKSAIKRTKTIEKRRAHRASQKSDL). The segment covering 7–23 (AIKRTKTIEKRRAHRAS) has biased composition (basic residues).

It belongs to the bacterial ribosomal protein bS20 family.

In terms of biological role, binds directly to 16S ribosomal RNA. In Brevibacillus brevis (strain 47 / JCM 6285 / NBRC 100599), this protein is Small ribosomal subunit protein bS20.